The chain runs to 489 residues: MDSSYSVISKTSYVELQKPTVNGKPRNKLLPSDEESFVNDFDDARNGVGGEDADDLDFDVADYPLVHGKSSNQGSGIYGAVFNLTTSIIGAGIMALPATMKVLGLVLGFVLIILMALLSEISVELLVRFSVLYKSKSYGEVVQFALGKTARVLSEICIIVNNGGVLVVYLIIMGDVMSGSLHHIGVLDQWLGNGFWDHRKVLILIVMVIFLAPLCALNKIDSLSVTSAASVALAVVFVVVCFVVATIKLIEGTIDPPRLSPDFGSKQAILDLLVVIPIMSNAYVCHFNVQPIYNELEGRSPHKMNRVGRITTAICVVVYASTAVSGYLLFGKDTESDILTNFDQDLGIRFSSAVNYIVRIGYILHLVLVFPVIHFSLRETVNTLLFEGSPPLSESKKRSLGLTVVLLALIYIGSTMIPNIWTAFKFTGATSAVSLGFTFPALIALRLGKQSNSLSFVERSVSWLMLILAVVVSIVGTIGNIYSLESKSD.

A run of 11 helical transmembrane segments spans residues 76-96 (GIYG…IMAL), 102-122 (VLGL…SEIS), 156-176 (ICII…MGDV), 201-221 (VLIL…NKID), 227-247 (SAAS…VATI), 269-289 (ILDL…HFNV), 310-330 (ITTA…YLLF), 357-377 (IVRI…HFSL), 404-424 (VVLL…WTAF), 425-445 (KFTG…LIAL), and 461-481 (VSWL…IGNI).

This sequence belongs to the amino acid/polyamine transporter 2 family. Amino acid/auxin permease (AAAP) (TC 2.A.18.6) subfamily.

Its subcellular location is the endoplasmic reticulum membrane. It is found in the vacuole membrane. In Arabidopsis thaliana (Mouse-ear cress), this protein is Amino acid transporter AVT6E.